The following is a 383-amino-acid chain: Lipid-A-disaccharide synthase (383 aa).

Belongs to the LpxB family.

It carries out the reaction a lipid X + a UDP-2-N,3-O-bis[(3R)-3-hydroxyacyl]-alpha-D-glucosamine = a lipid A disaccharide + UDP + H(+). The protein operates within bacterial outer membrane biogenesis; LPS lipid A biosynthesis. Functionally, condensation of UDP-2,3-diacylglucosamine and 2,3-diacylglucosamine-1-phosphate to form lipid A disaccharide, a precursor of lipid A, a phosphorylated glycolipid that anchors the lipopolysaccharide to the outer membrane of the cell. In Anaeromyxobacter dehalogenans (strain 2CP-C), this protein is Lipid-A-disaccharide synthase.